Reading from the N-terminus, the 249-residue chain is DNA repair protein RecO (249 aa).

Belongs to the RecO family.

Functionally, involved in DNA repair and RecF pathway recombination. The protein is DNA repair protein RecO of Afipia carboxidovorans (strain ATCC 49405 / DSM 1227 / KCTC 32145 / OM5) (Oligotropha carboxidovorans).